The following is a 287-amino-acid chain: Ribosomal RNA small subunit methyltransferase A (287 aa).

The S-adenosyl-L-methionine site is built by Asn18, Leu20, Gly45, Glu66, Asp91, and Asn118.

It belongs to the class I-like SAM-binding methyltransferase superfamily. rRNA adenine N(6)-methyltransferase family. RsmA subfamily.

It localises to the cytoplasm. The enzyme catalyses adenosine(1518)/adenosine(1519) in 16S rRNA + 4 S-adenosyl-L-methionine = N(6)-dimethyladenosine(1518)/N(6)-dimethyladenosine(1519) in 16S rRNA + 4 S-adenosyl-L-homocysteine + 4 H(+). Its function is as follows. Specifically dimethylates two adjacent adenosines (A1518 and A1519) in the loop of a conserved hairpin near the 3'-end of 16S rRNA in the 30S particle. May play a critical role in biogenesis of 30S subunits. This is Ribosomal RNA small subunit methyltransferase A from Haemophilus influenzae (strain PittEE).